We begin with the raw amino-acid sequence, 625 residues long: Probable thymidylate synthase (625 aa).

The disordered stretch occupies residues 224–323 (AVKNIDGQDD…PEPPVPFTSS (100 aa)). The segment covering 243 to 257 (EEYDDDDDDDVDDNE) has biased composition (acidic residues). Composition is skewed to polar residues over residues 258–269 (QSNSMIETSANA) and 293–312 (SQAP…NVTT). DUMP contacts are provided by residues Arg-350 and 477–478 (RR). The Nucleophile role is filled by Cys-497. Residues 524-527 (RSAD), Asn-535, and 565-567 (HIY) contribute to the dUMP site. Residue Asp-527 participates in (6R)-5,10-methylene-5,6,7,8-tetrahydrofolate binding.

The protein in the N-terminal section; belongs to the HFCD (homo-oligomeric flavin containing Cys decarboxylase) superfamily. In the C-terminal section; belongs to the thymidylate synthase family.

The protein resides in the cytoplasm. The catalysed reaction is dUMP + (6R)-5,10-methylene-5,6,7,8-tetrahydrofolate = 7,8-dihydrofolate + dTMP. It functions in the pathway pyrimidine metabolism; dTTP biosynthesis. In terms of biological role, required for both nuclear and mitochondrial DNA synthesis. The chain is Probable thymidylate synthase from Schizosaccharomyces pombe (strain 972 / ATCC 24843) (Fission yeast).